The following is a 262-amino-acid chain: Acyl-coenzyme A diphosphatase FITM2 (262 aa).

Residues 1 to 23 (MEHLERCAWFLRGTLVRATVRRH) lie on the Cytoplasmic side of the membrane. Residues 24–44 (LPWALVAAMLAGSVVKELSPL) traverse the membrane as a helical segment. The Lumenal portion of the chain corresponds to 45-57 (PESYLSNKRNVLN). The helical transmembrane segment at 58–78 (VYFVKLAWAWTVCLLLPFIAL) threads the bilayer. At 79-93 (TNYHLTGKTSLVLRR) the chain is on the cytoplasmic side. A helical membrane pass occupies residues 94–114 (LSTLLVGTAIWYICTALFSNI). Residues 115-145 (EHYTGSCYQSPALEGIRQEHRSKQQCHREGG) lie on the Lumenal side of the membrane. The helical transmembrane segment at 146-166 (FWHGFDISGHSFLLTFCALMI) threads the bilayer. Residue histidine 155 is part of the active site. Topologically, residues 167–190 (VEEMAVLHEVKTDRGHHLHAAITT) are cytoplasmic. Residues 191–211 (LVVALGFLTFIWVWMFLCTAV) form a helical membrane-spanning segment. The Lumenal segment spans residues 212–218 (YFHDLTQ). The active site involves histidine 214. The helical transmembrane segment at 219-239 (KVFGTMFGLLGWYGTYGYWYL) threads the bilayer. Over 240–262 (KSFSPGLPPQSCSLTLKRDTYKK) the chain is Cytoplasmic.

The protein belongs to the FIT family. As to expression, widely expressed, with highest levels in white and brown adipose tissues (at protein level). In the heart, mRNA expression levels do not correlate well with protein levels, suggesting post-transcriptional regulation in this organ.

The protein resides in the endoplasmic reticulum membrane. It carries out the reaction an acyl-CoA + H2O = an acyl-4'-phosphopantetheine + adenosine 3',5'-bisphosphate + 2 H(+). The catalysed reaction is (9Z)-octadecenoyl-CoA + H2O = S-(9Z-octadecenoyl)-4'-phosphopantetheine + adenosine 3',5'-bisphosphate + 2 H(+). The enzyme catalyses (5Z,8Z,11Z,14Z)-eicosatetraenoyl-CoA + H2O = S-(5Z,8Z,11Z,14Z-eicosatetraenoyl)-4'-phosphopantetheine + adenosine 3',5'-bisphosphate + 2 H(+). It catalyses the reaction hexadecanoyl-CoA + H2O = S-hexadecanoyl-4'-phosphopantetheine + adenosine 3',5'-bisphosphate + 2 H(+). Functionally, fatty acyl-coenzyme A (CoA) diphosphatase that hydrolyzes fatty acyl-CoA to yield acyl-4'-phosphopantetheine and adenosine 3',5'-bisphosphate. Preferentially hydrolyzes unsaturated long-chain acyl-CoA substrates such as oleoyl-CoA/(9Z)-octadecenoyl-CoA and arachidonoyl-CoA/(5Z,8Z,11Z,14Z)-eicosatetraenoyl-CoA in the endoplasmic reticulum (ER) lumen. This catalytic activity is required for maintaining ER structure and for lipid droplets (LDs) biogenesis, which are lipid storage organelles involved in maintaining lipid and energy homeostasis. Directly binds to diacylglycerol (DAGs) and triacylglycerol, which is also important for LD biogenesis. May support directional budding of nacent LDs from the ER into the cytosol by reducing DAG levels at sites of LD formation. Plays a role in the regulation of cell morphology and cytoskeletal organization. This Mus musculus (Mouse) protein is Acyl-coenzyme A diphosphatase FITM2.